The following is a 165-amino-acid chain: MSATAEDNARGAKPAGNFARTVSQRKRKRLFLIGGALAVLAVAVGLMLMAFSQDIRFFRTPADLTEQDMASGSRFRLGGLVEEGSVSREGSELRFTVTDTIKTVKVVFEGIPPDLFREGQGVVAEGRFGDDGVFRADNVLAKHDENYVPKDLADSLKEKGVWEGK.

Residues 1-29 (MSATAEDNARGAKPAGNFARTVSQRKRKR) lie on the Cytoplasmic side of the membrane. A helical; Signal-anchor for type II membrane protein membrane pass occupies residues 30-50 (LFLIGGALAVLAVAVGLMLMA). Topologically, residues 51–165 (FSQDIRFFRT…LKEKGVWEGK (115 aa)) are periplasmic. The heme site is built by His-143 and Tyr-147.

Belongs to the CcmE/CycJ family.

It localises to the cell inner membrane. In terms of biological role, heme chaperone required for the biogenesis of c-type cytochromes. Transiently binds heme delivered by CcmC and transfers the heme to apo-cytochromes in a process facilitated by CcmF and CcmH. This Brucella anthropi (strain ATCC 49188 / DSM 6882 / CCUG 24695 / JCM 21032 / LMG 3331 / NBRC 15819 / NCTC 12168 / Alc 37) (Ochrobactrum anthropi) protein is Cytochrome c-type biogenesis protein CcmE.